Consider the following 402-residue polypeptide: 2,3-bisphosphoglycerate-independent phosphoglycerate mutase (402 aa).

The interval S155 to P174 is disordered. Over residues S160 to P174 the composition is skewed to basic and acidic residues.

Belongs to the BPG-independent phosphoglycerate mutase family. A-PGAM subfamily.

It carries out the reaction (2R)-2-phosphoglycerate = (2R)-3-phosphoglycerate. The protein operates within carbohydrate degradation; glycolysis; pyruvate from D-glyceraldehyde 3-phosphate: step 3/5. Functionally, catalyzes the interconversion of 2-phosphoglycerate and 3-phosphoglycerate. The sequence is that of 2,3-bisphosphoglycerate-independent phosphoglycerate mutase from Picrophilus torridus (strain ATCC 700027 / DSM 9790 / JCM 10055 / NBRC 100828 / KAW 2/3).